Reading from the N-terminus, the 193-residue chain is Transcriptional activator GvpE2 (193 aa).

K143–R148 is a DNA binding site. The leucine-zipper stretch occupies residues Q153–Q184.

In terms of assembly, homodimer. Interacts with endogenous GvpD, also with GvpD from H.mediterranei.

It localises to the cytoplasm. With respect to regulation, degraded once GvpD is translated; degradation requires 'Arg-494' of GvpD; tested in transgenic H.volcanii. Fusion of green fluorescent protein to its C-terminus partially protects it from degradation. In terms of biological role, plays a regulatory role in gas vesicle synthesis, required to activate transcription of the c-gvpA operon. Gas vesicles are hollow, gas filled proteinaceous nanostructures found in several microbial planktonic microorganisms. They allow positioning of halobacteria at the optimal depth for growth in the poorly aerated, shallow brine pools of their habitat. Its function is as follows. Expression of 2 c-vac DNA fragments containing 2 divergently transcribed regions (gvpE-gvpF-gvpG-gvpH-gvpI-gvpJ-gvpK-gvpL-gvpM and gvpA-gvpC-gvpN-gvpO) allows H.volcanii to produce gas vesicles. All site-directed mutagenesis is tested in H.volcanii. This is Transcriptional activator GvpE2 from Halobacterium salinarum (strain ATCC 700922 / JCM 11081 / NRC-1) (Halobacterium halobium).